Here is a 460-residue protein sequence, read N- to C-terminus: Probable carboxylesterase 11 (460 aa).

Composition is skewed to polar residues over residues 26–35 and 132–145; these read QSSGDESSSD and NSYG…SPEA. 2 disordered regions span residues 26-52 and 132-161; these read QSSG…APNP and NSYG…SSGG. An Involved in the stabilization of the negatively charged intermediate by the formation of the oxyanion hole motif is present at residues 173 to 175; sequence HGG. Residues Ser-289, Asp-392, and His-422 contribute to the active site.

It belongs to the 'GDXG' lipolytic enzyme family. As to expression, expressed in roots, leaves, stems, flowers and siliques.

It catalyses the reaction a carboxylic ester + H2O = an alcohol + a carboxylate + H(+). Carboxylesterase acting on esters with varying acyl chain length. This chain is Probable carboxylesterase 11 (CXE11), found in Arabidopsis thaliana (Mouse-ear cress).